A 319-amino-acid polypeptide reads, in one-letter code: Ribonuclease Z (319 aa).

Positions 62, 64, 66, 67, 145, 215, and 273 each coordinate Zn(2+). Asp-66 functions as the Proton acceptor in the catalytic mechanism.

Belongs to the RNase Z family. In terms of assembly, homodimer. It depends on Zn(2+) as a cofactor.

It catalyses the reaction Endonucleolytic cleavage of RNA, removing extra 3' nucleotides from tRNA precursor, generating 3' termini of tRNAs. A 3'-hydroxy group is left at the tRNA terminus and a 5'-phosphoryl group is left at the trailer molecule.. Functionally, zinc phosphodiesterase, which displays some tRNA 3'-processing endonuclease activity. Probably involved in tRNA maturation, by removing a 3'-trailer from precursor tRNA. The chain is Ribonuclease Z from Borrelia garinii subsp. bavariensis (strain ATCC BAA-2496 / DSM 23469 / PBi) (Borreliella bavariensis).